Here is a 348-residue protein sequence, read N- to C-terminus: D-alanine--D-alanine ligase (348 aa).

In terms of domain architecture, ATP-grasp spans 132 to 334; that stretch reads KRVLESAGIP…YAELIEELVR (203 aa). 162-217 lines the ATP pocket; it reads EAALSYPVFVKPANMGSSVGISKAESEEELRAAILLALTYDSRILIEQGVLAREIE. Residues Asp288, Glu301, and Asn303 each coordinate Mg(2+).

The protein belongs to the D-alanine--D-alanine ligase family. It depends on Mg(2+) as a cofactor. Requires Mn(2+) as cofactor.

Its subcellular location is the cytoplasm. It carries out the reaction 2 D-alanine + ATP = D-alanyl-D-alanine + ADP + phosphate + H(+). It functions in the pathway cell wall biogenesis; peptidoglycan biosynthesis. In terms of biological role, cell wall formation. This Streptococcus equi subsp. zooepidemicus (strain H70) protein is D-alanine--D-alanine ligase.